We begin with the raw amino-acid sequence, 240 residues long: UPF0502 protein Veis_2102 (240 aa).

Belongs to the UPF0502 family.

The sequence is that of UPF0502 protein Veis_2102 from Verminephrobacter eiseniae (strain EF01-2).